The following is a 384-amino-acid chain: Na(+)/H(+) antiporter NhaA (384 aa).

The next 11 helical transmembrane spans lie at 7–27, 58–78, 94–114, 124–144, 153–173, 179–199, 204–224, 256–276, 285–305, 325–345, and 357–377; these read FYNLETIGGILLFIAAVLAII, LLLWINDGLMAIYFLLIGLEI, LVPALTALAGLLFPALIFIFF, GWAIPTATDIAFTLGIVSLLG, ILLTAIAIFDDIAAIVIIALF, SLLSLSLALVFTLILIGLNYF, ISVFMLFGVALWIAVLKSGVH, VVFLILPLFAFANAGVSFVGL, VVLGIGLGLFLGKQLGIFLSL, VYGIALICGVGFTMSLFIGSL, and MVKIGVVFGSFIAGLTGFLVL.

The protein belongs to the NhaA Na(+)/H(+) (TC 2.A.33) antiporter family.

The protein localises to the cell inner membrane. The catalysed reaction is Na(+)(in) + 2 H(+)(out) = Na(+)(out) + 2 H(+)(in). In terms of biological role, na(+)/H(+) antiporter that extrudes sodium in exchange for external protons. The polypeptide is Na(+)/H(+) antiporter NhaA (Legionella pneumophila (strain Corby)).